A 202-amino-acid polypeptide reads, in one-letter code: Putative chromophore lyase CpcV (202 aa).

The protein belongs to the CpcS/CpeS biliprotein lyase family.

Covalently attaches a chromophore to Cys residue(s) of phycobiliproteins. This Picosynechococcus sp. (strain ATCC 27264 / PCC 7002 / PR-6) (Agmenellum quadruplicatum) protein is Putative chromophore lyase CpcV (cpcV).